We begin with the raw amino-acid sequence, 295 residues long: MSKIPSVNIKALLDAGVHFGHKTSRWNPKMASYIYGERDDVHIIDLRQSVALMSVALNAIYETVKKDGKILFVSTKIQASDIIAEYAEKCGQYYVNHRWLGGMLTNWKTIAGSIEKLNKLDKTLENEEALMGYTKKEILNMSRKKDKLLLSLAGIRNLNSKPDLLVVIDTNKEHIAINEAVKLNVPIVAVVDTNSNPDNVDYPIPGNDDSIRAIRLYCSLFADAALQGLEESMKASGVDMGAMQEHTDKGLTSKNVSKLKQTKKFSKTKNIDEETNTEFEQALNDADENKNSDNA.

The interval 247–295 (TDKGLTSKNVSKLKQTKKFSKTKNIDEETNTEFEQALNDADENKNSDNA) is disordered.

It belongs to the universal ribosomal protein uS2 family.

This chain is Small ribosomal subunit protein uS2, found in Rickettsia conorii (strain ATCC VR-613 / Malish 7).